The sequence spans 100 residues: MFGHALLLGAFPFCIGIYGLITSRNTVRALMCLELIFNAVNVNFVTFPNYLDIQQIKGEILSVFVIAVAAAEAAIGSAIVLAIYRNRESIRIDQFNLLKW.

Transmembrane regions (helical) follow at residues 1–21 (MFGH…YGLI), 29–49 (ALMC…TFPN), and 63–83 (VFVI…VLAI).

The protein belongs to the complex I subunit 4L family. As to quaternary structure, NDH is composed of at least 16 different subunits, 5 of which are encoded in the nucleus.

Its subcellular location is the plastid. It is found in the chloroplast thylakoid membrane. The catalysed reaction is a plastoquinone + NADH + (n+1) H(+)(in) = a plastoquinol + NAD(+) + n H(+)(out). It carries out the reaction a plastoquinone + NADPH + (n+1) H(+)(in) = a plastoquinol + NADP(+) + n H(+)(out). Its function is as follows. NDH shuttles electrons from NAD(P)H:plastoquinone, via FMN and iron-sulfur (Fe-S) centers, to quinones in the photosynthetic chain and possibly in a chloroplast respiratory chain. The immediate electron acceptor for the enzyme in this species is believed to be plastoquinone. Couples the redox reaction to proton translocation, and thus conserves the redox energy in a proton gradient. The polypeptide is NAD(P)H-quinone oxidoreductase subunit 4L, chloroplastic (Huperzia lucidula (Shining clubmoss)).